We begin with the raw amino-acid sequence, 573 residues long: Sulfite reductase [NADPH] hemoprotein beta-component (573 aa).

Residues Cys438, Cys444, Cys483, and Cys487 each coordinate [4Fe-4S] cluster. Siroheme is bound at residue Cys487.

The protein belongs to the nitrite and sulfite reductase 4Fe-4S domain family. Alpha(8)-beta(8). The alpha component is a flavoprotein, the beta component is a hemoprotein. Requires siroheme as cofactor. It depends on [4Fe-4S] cluster as a cofactor.

The catalysed reaction is hydrogen sulfide + 3 NADP(+) + 3 H2O = sulfite + 3 NADPH + 4 H(+). Its pathway is sulfur metabolism; hydrogen sulfide biosynthesis; hydrogen sulfide from sulfite (NADPH route): step 1/1. Component of the sulfite reductase complex that catalyzes the 6-electron reduction of sulfite to sulfide. This is one of several activities required for the biosynthesis of L-cysteine from sulfate. The protein is Sulfite reductase [NADPH] hemoprotein beta-component of Staphylococcus haemolyticus (strain JCSC1435).